A 1708-amino-acid chain; its full sequence is MAAANAPIAMREALTLTSLGIAPQFVTFTHVTMESEKYICVRETSPQNSVVIVDMAMPAQPLRRPITADSALMNPNTRILALKAQIPGTTQDHLQIFNIEAKTKIKSHQMPEQVVFWKWITPKLLGLVTQTSVYHWSIEGDSEPAKMFDRTANLANNQIINYRCDPSEKWLVLIGIAPGAPERPQLVKGNMQLFSVDQQRSQALEAHAASFASFKVVGNENPSTLICFASKTTNAGQITSKLHVIELGAQPGKPGFSKKQADLFFPPDFQDDFPVAMQISQKYGLIYVITKLGLLFVYDLETAAAVYRNRISPDPIFLTAESSASGGFYAINRRGQVLHATVNDATIVPFVSSQLNNLELAVNLAKRANLPGAENLVVQRFQELFAQTKYKEAAELAAESPQGLLRTPETVAKFQSVPVQAGQTPPLLQYFGTLLTRGKLNAYESLELSRLVVNQNKKNLLENWLAEDKLECSEELGDLVKTVDNDLALKIYIKARATPKVVAAFAERREFDKILIYSKQVGYTPDYLFLLQTILRTDPQGAVNFALMMSQMEGGCPVDYNTITDLFLQRNMIREATAFLLDVLKPNLPEHAFLQTKVLEINLVTYPNVADAILANGMFSHYDRPRVAQLCEKAGLYLRALQHYTELPDIKRVMVNTHAIEPQALVEFFGTLSREWALECMKDLLLVNLRGNLQIVVQAAKEYSEQLGVDACIKLFEQFKSYEGLYFFLGAYLSSSEDPDIHFKYIEAAARTGQIKEVERVTRESNFYDAEKTKNFLMEAKLPDARPLINVCDRFGFVPDLTHYLYTNNMLRYIEGYVQKVNPGNAPLVVGQLLDDECPEDFIKGLILSVRSLLPVEPLVDECEKRNRLRLLTQFLEHLVSEGSQDVHVHNALGKIIIDSNNNPEHFLTTNPFYDSRVVGKYCEKRDPTLAVVAYRRGQCDDELINVTNKNSLFKLQARYVVERMDGDLWDKVLQPENEYRRQLIDQVVSTALPESKSPEQVSAAVKAFMTADLPHELIELLEKIVLQNSAFSGNFNLQNLLILTAIKADPSRVMDYVNRLDNFDGPAVGEVAVEAQLFEEAFAIFKKFNLNVQAVNVLLDNIRSIERAEEFAFRVEEDAVWSQVAKAQLREGLVSEAIESFIRADDATHFLDVIRAAEEANVYDDLVKYLLMVRQKAREPKVDGELIFAYAKIDRLSDIEEFILMPNVANLQNVGDRLYDEELYEAAKIIYAFISNWAKLAVTLVKLKQFQGAVDAARKANSAKTWKEVCFACVDAEEFRLAQICGLNIIVQVDDLEEVSEYYQNRGCFNELISLMESGLGLERAHMGIFTELGVLYARYRPEKLMEHIKLFSTRLNIPKLIRACDEQQHWKELTYLYIQYDEFDNAATTIMNHSPDAWDHMQFKDVAVKVANVELYYKAVHFYLQEHPDLINDLLNVLALRLDHTRVVDIMRKAGQLHLVKPYMVAVQSNNVSAVNEALNELYVEEEDYERLRESVDMHDNFDQIGLAQKLEKHELLEMRRIAAYIYKKAGRWKQSIALSKKDNMYKDCMETCSQSGDRELSEDLLVYFIEQGKKECFASCLFICYDLIRADVALELAWMNNMVDFAFPYLLQFIREYTSKVDELVKDRIESQNEVRAKEKEEKDLVAQQNMYAQLLPLALPAPPGMGGPPPPMGMPGMPPMGGMGMPPMGPGPMPAYGMPPMGSY.

Residues 1 to 492 (MAAANAPIAM…VDNDLALKIY (492 aa)) are globular terminal domain. WD40-like repeat stretches follow at residues 25-67 (FVTF…RPIT), 68-113 (ADSA…MPEQ), 114-155 (VVFW…ANLA), 156-205 (NNQI…QALE), 206-270 (AHAA…PDFQ), 271-314 (DDFP…ISPD), and 315-343 (PIFL…ATVN). The binding site for the uncoating ATPase, involved in lattice disassembly stretch occupies residues 462–478 (ENWLAEDKLECSEELGD). A flexible linker region spans residues 493–536 (IKARATPKVVAAFAERREFDKILIYSKQVGYTPDYLFLLQTILR). Positions 537-648 (TDPQGAVNFA…RALQHYTELP (112 aa)) are distal segment. The tract at residues 537–1708 (TDPQGAVNFA…AYGMPPMGSY (1172 aa)) is heavy chain arm. CHCR repeat units follow at residues 551-697 (QMEG…QIVV), 700-842 (AKEY…PEDF), 847-986 (ILSV…QLID), 993-1138 (LPES…VSEA), 1142-1283 (FIRA…FRLA), 1288-1434 (LNII…DLIN), and 1437-1580 (LNVL…KECF). The segment at 653–1708 (VMVNTHAIEP…AYGMPPMGSY (1056 aa)) is proximal segment. The tract at residues 1227-1536 (AAKIIYAFIS…YIYKKAGRWK (310 aa)) is involved in binding clathrin light chain. Residues 1564-1708 (SEDLLVYFIE…AYGMPPMGSY (145 aa)) are trimerization.

It belongs to the clathrin heavy chain family. Clathrin triskelions, composed of 3 heavy chains and 3 light chains, are the basic subunits of the clathrin coat.

It is found in the cytoplasmic vesicle membrane. Its subcellular location is the membrane. It localises to the coated pit. In terms of biological role, clathrin is the major protein of the polyhedral coat of coated pits and vesicles. This Oryza sativa subsp. japonica (Rice) protein is Clathrin heavy chain 1.